A 237-amino-acid chain; its full sequence is tRNA (guanine-N(7)-)-methyltransferase (237 aa).

Positions 56, 81, 108, and 131 each coordinate S-adenosyl-L-methionine. Residue Asp-131 is part of the active site. Substrate-binding positions include Lys-135, Asp-167, and 204–207 (TKFE).

This sequence belongs to the class I-like SAM-binding methyltransferase superfamily. TrmB family.

It carries out the reaction guanosine(46) in tRNA + S-adenosyl-L-methionine = N(7)-methylguanosine(46) in tRNA + S-adenosyl-L-homocysteine. It functions in the pathway tRNA modification; N(7)-methylguanine-tRNA biosynthesis. Its function is as follows. Catalyzes the formation of N(7)-methylguanine at position 46 (m7G46) in tRNA. This Legionella pneumophila (strain Paris) protein is tRNA (guanine-N(7)-)-methyltransferase.